The following is a 51-amino-acid chain: Insulin-2 (51 aa).

Cystine bridges form between Cys8-Cys37, Cys20-Cys50, and Cys36-Cys41.

This sequence belongs to the insulin family. In terms of assembly, heterodimer of a B chain and an A chain linked by two disulfide bonds.

The protein localises to the secreted. In terms of biological role, insulin decreases blood glucose concentration. It increases cell permeability to monosaccharides, amino acids and fatty acids. It accelerates glycolysis, the pentose phosphate cycle, and glycogen synthesis in liver. This Katsuwonus pelamis (Skipjack tuna) protein is Insulin-2.